A 293-amino-acid polypeptide reads, in one-letter code: Nucleotide-binding protein BCG9842_B5683 (293 aa).

An ATP-binding site is contributed by 14–21 (GMSGAGKT). 65-68 (DLRG) is a GTP binding site.

The protein belongs to the RapZ-like family.

Functionally, displays ATPase and GTPase activities. In Bacillus cereus (strain G9842), this protein is Nucleotide-binding protein BCG9842_B5683.